Here is a 395-residue protein sequence, read N- to C-terminus: L-rhamnonate dehydratase (395 aa).

Residues His23 and Arg49 each coordinate substrate. 3 residues coordinate Mg(2+): Asp215, Glu241, and Glu269. His319 serves as the catalytic Proton acceptor. Residue Glu339 coordinates substrate.

Belongs to the mandelate racemase/muconate lactonizing enzyme family. RhamD subfamily. In terms of assembly, homooctamer; tetramer of dimers. The cofactor is Mg(2+).

It catalyses the reaction L-rhamnonate = 2-dehydro-3-deoxy-L-rhamnonate + H2O. In terms of biological role, catalyzes the dehydration of L-rhamnonate to 2-keto-3-deoxy-L-rhamnonate (KDR). The protein is L-rhamnonate dehydratase (rhmD) of Polaromonas sp. (strain JS666 / ATCC BAA-500).